The chain runs to 189 residues: Molybdenum cofactor guanylyltransferase (189 aa).

GTP contacts are provided by residues 12–14, lysine 24, aspartate 68, and aspartate 94; that span reads LAG. Residue aspartate 94 participates in Mg(2+) binding.

Belongs to the MobA family. As to quaternary structure, monomer. Mg(2+) is required as a cofactor.

Its subcellular location is the cytoplasm. The catalysed reaction is Mo-molybdopterin + GTP + H(+) = Mo-molybdopterin guanine dinucleotide + diphosphate. In terms of biological role, transfers a GMP moiety from GTP to Mo-molybdopterin (Mo-MPT) cofactor (Moco or molybdenum cofactor) to form Mo-molybdopterin guanine dinucleotide (Mo-MGD) cofactor. This chain is Molybdenum cofactor guanylyltransferase, found in Xanthomonas euvesicatoria pv. vesicatoria (strain 85-10) (Xanthomonas campestris pv. vesicatoria).